We begin with the raw amino-acid sequence, 288 residues long: Polyamine aminopropyltransferase (288 aa).

A PABS domain is found at Glu9–Asp238. Residue Gln33 coordinates S-methyl-5'-thioadenosine. Residues His64 and Asp88 each coordinate spermidine. S-methyl-5'-thioadenosine contacts are provided by residues Glu108 and Asp140–Gly141. Asp158 functions as the Proton acceptor in the catalytic mechanism. Asp158–Asp161 lines the spermidine pocket. Pro165 is a binding site for S-methyl-5'-thioadenosine.

The protein belongs to the spermidine/spermine synthase family. Homodimer or homotetramer.

It localises to the cytoplasm. It catalyses the reaction S-adenosyl 3-(methylsulfanyl)propylamine + putrescine = S-methyl-5'-thioadenosine + spermidine + H(+). It participates in amine and polyamine biosynthesis; spermidine biosynthesis; spermidine from putrescine: step 1/1. Its function is as follows. Catalyzes the irreversible transfer of a propylamine group from the amino donor S-adenosylmethioninamine (decarboxy-AdoMet) to putrescine (1,4-diaminobutane) to yield spermidine. The sequence is that of Polyamine aminopropyltransferase from Shigella sonnei (strain Ss046).